A 339-amino-acid chain; its full sequence is Glycerol-3-phosphate dehydrogenase [NAD(P)+] (339 aa).

S15, Y16, H36, and K110 together coordinate NADPH. Sn-glycerol 3-phosphate is bound by residues K110, G139, and T141. A143 provides a ligand contact to NADPH. Sn-glycerol 3-phosphate is bound by residues K195, D248, S258, R259, and N260. The active-site Proton acceptor is K195. R259 serves as a coordination point for NADPH. The NADPH site is built by V283 and E285.

The protein belongs to the NAD-dependent glycerol-3-phosphate dehydrogenase family.

Its subcellular location is the cytoplasm. The catalysed reaction is sn-glycerol 3-phosphate + NAD(+) = dihydroxyacetone phosphate + NADH + H(+). It catalyses the reaction sn-glycerol 3-phosphate + NADP(+) = dihydroxyacetone phosphate + NADPH + H(+). It participates in membrane lipid metabolism; glycerophospholipid metabolism. In terms of biological role, catalyzes the reduction of the glycolytic intermediate dihydroxyacetone phosphate (DHAP) to sn-glycerol 3-phosphate (G3P), the key precursor for phospholipid synthesis. This Yersinia pseudotuberculosis serotype O:1b (strain IP 31758) protein is Glycerol-3-phosphate dehydrogenase [NAD(P)+].